Consider the following 254-residue polypeptide: Small ribosomal subunit protein eS1 (254 aa).

The residue at position 2 (A2) is an N-acetylalanine; partial.

This sequence belongs to the eukaryotic ribosomal protein eS1 family. As to quaternary structure, component of the small ribosomal subunit. Mature ribosomes consist of a small (40S) and a large (60S) subunit. The 40S subunit contains about 33 different proteins and 1 molecule of RNA (18S). The 60S subunit contains about 49 different proteins and 3 molecules of RNA (25S, 5.8S and 5S).

The protein resides in the cytoplasm. In Zygosaccharomyces rouxii (strain ATCC 2623 / CBS 732 / NBRC 1130 / NCYC 568 / NRRL Y-229), this protein is Small ribosomal subunit protein eS1.